The chain runs to 212 residues: MNPKCSLILLSGGKGERFGANQPKQYLPFQGQPLILHALNSALLIPEINEIIVVCDASYEHIFEGYSVKFAPAGMRRQDSVFSGLHHVTNPWVLVHDGVRPFIYPDEVSELIVIAQQTGAATLVSNVPYTIKQRNPVKTLDRDSLSIVHTPQCIKTEILLEGLELADREQITLVDDTQAAELLGIPVSLVSNKHPQIKITYPEDLTIAHALL.

Belongs to the IspD/TarI cytidylyltransferase family. IspD subfamily.

The enzyme catalyses 2-C-methyl-D-erythritol 4-phosphate + CTP + H(+) = 4-CDP-2-C-methyl-D-erythritol + diphosphate. It functions in the pathway isoprenoid biosynthesis; isopentenyl diphosphate biosynthesis via DXP pathway; isopentenyl diphosphate from 1-deoxy-D-xylulose 5-phosphate: step 2/6. Catalyzes the formation of 4-diphosphocytidyl-2-C-methyl-D-erythritol from CTP and 2-C-methyl-D-erythritol 4-phosphate (MEP). The polypeptide is 2-C-methyl-D-erythritol 4-phosphate cytidylyltransferase (Chlamydia felis (strain Fe/C-56) (Chlamydophila felis)).